A 338-amino-acid polypeptide reads, in one-letter code: Nucleoid-associated protein VSAL_I1059 (338 aa).

The segment at 319 to 338 is disordered; sequence KGTPPNLKDQLTRRLGSSES.

This sequence belongs to the YejK family.

It localises to the cytoplasm. It is found in the nucleoid. This Aliivibrio salmonicida (strain LFI1238) (Vibrio salmonicida (strain LFI1238)) protein is Nucleoid-associated protein VSAL_I1059.